A 315-amino-acid polypeptide reads, in one-letter code: MANITRMANHTGKLDFILMGLFRRSKHPALLSVVIFVVFLKALSGNAVLILLIHCDAHLHSPMYFFISQLSLMDMAYISVTVPKMLLDQVMGVNKVSAPECGMQMFLYLTLAGSEFFLLATMAYDRYVAICHPLRYPVLMNHRVCLFLASGCWFLGSVDGFMLTPITMSFPFCRSWEIHHFFCEVPAVTILSCSDTSLYETLMYLCCVLMLLIPVTIISSSYLLILLTVHRMNSAEGRKKAFATCSSHLTVVILFYGAAVYTYMLPSSYHTPEKDMMVSVFYTILTPVLNPLIYSLRNKDVMGALKKMLTVRFVL.

Topologically, residues Met-1–Ala-29 are extracellular. N-linked (GlcNAc...) asparagine glycans are attached at residues Asn-3 and Asn-9. A helical membrane pass occupies residues Leu-30 to Ile-53. Residues His-54–Ser-61 lie on the Cytoplasmic side of the membrane. The chain crosses the membrane as a helical span at residues Pro-62 to Pro-83. The Extracellular segment spans residues Lys-84–Gln-104. Cys-101 and Cys-193 are oxidised to a cystine. The helical transmembrane segment at Met-105 to Tyr-124 threads the bilayer. The Cytoplasmic portion of the chain corresponds to Asp-125–Arg-143. The chain crosses the membrane as a helical span at residues Val-144–Met-162. The Extracellular segment spans residues Leu-163–Tyr-199. A helical transmembrane segment spans residues Glu-200 to Leu-223. At Leu-224–Lys-240 the chain is on the cytoplasmic side. A helical membrane pass occupies residues Ala-241–Tyr-263. The Extracellular segment spans residues Met-264–Met-276. A helical membrane pass occupies residues Met-277–Leu-296. Residues Arg-297–Leu-315 are Cytoplasmic-facing.

It belongs to the G-protein coupled receptor 1 family.

It is found in the cell membrane. Functionally, odorant receptor. In Homo sapiens (Human), this protein is Olfactory receptor 2T5 (OR2T5).